Here is a 344-residue protein sequence, read N- to C-terminus: Cell adhesion molecule CEACAM6 (344 aa).

An N-terminal signal peptide occupies residues 1–34 (MGPPSAPPCRLHVPWKEVLLTASLLTFWNPPTTA). Residues 35-142 (KLTIESTPFN…EATGQFHVYP (108 aa)) form the Ig-like V-type domain. N-linked (GlcNAc...) asparagine glycosylation is found at N104, N111, N115, N152, N173, N197, N224, N256, N274, N288, N292, and N309. Ig-like C2-type domains lie at 145–232 (PKPS…VTLN) and 240–314 (PTIS…TTVT). The cysteines at positions 167 and 215 are disulfide-linked. C259 and C299 are oxidised to a cystine. The GPI-anchor amidated glycine moiety is linked to residue G320. The propeptide at 321–344 (SAPVLSAVATVGITIGVLARVALI) is removed in mature form.

Belongs to the immunoglobulin superfamily. CEA family. Homodimer; homodimerizes via its Ig-like V-type domain. Heterodimer with CEACAM8; heterodimerizes via its Ig-like V-type domain. In terms of processing, glycosylated. Expressed in neutrophils. Expressed in columnar epithelial and goblet cells of the colon. Expressed in numerous tumor cell lines (at protein level).

It is found in the cell membrane. The protein resides in the apical cell membrane. The protein localises to the cell surface. Functionally, cell surface glycoprotein that plays a role in cell adhesion and tumor progression. Intercellular adhesion occurs in a calcium- and fibronectin-independent manner. Mediates homophilic and heterophilic cell adhesion with other carcinoembryonic antigen-related cell adhesion molecules, such as CEACAM5 and CEACAM8. Heterophilic interaction with CEACAM8 occurs in activated neutrophils. Plays a role in neutrophil adhesion to cytokine-activated endothelial cells. Plays a role in cell migration and cell adhesion to endothelial cells. The polypeptide is Cell adhesion molecule CEACAM6 (Homo sapiens (Human)).